The following is a 419-amino-acid chain: tRNA modification GTPase MnmE (419 aa).

Positions 20, 76, and 115 each coordinate (6S)-5-formyl-5,6,7,8-tetrahydrofolate. The region spanning 211–348 (GYEVAIIGPP…LLDLVYDRLR (138 aa)) is the TrmE-type G domain. Residue N221 coordinates K(+). GTP-binding positions include 221–226 (NAGKST), 240–246 (SEIAGTT), and 265–268 (DTAG). A Mg(2+)-binding site is contributed by S225. K(+)-binding residues include S240, I242, and T245. T246 is a binding site for Mg(2+). K419 is a (6S)-5-formyl-5,6,7,8-tetrahydrofolate binding site.

Belongs to the TRAFAC class TrmE-Era-EngA-EngB-Septin-like GTPase superfamily. TrmE GTPase family. In terms of assembly, homodimer. Heterotetramer of two MnmE and two MnmG subunits. It depends on K(+) as a cofactor.

It is found in the cytoplasm. Exhibits a very high intrinsic GTPase hydrolysis rate. Involved in the addition of a carboxymethylaminomethyl (cmnm) group at the wobble position (U34) of certain tRNAs, forming tRNA-cmnm(5)s(2)U34. This chain is tRNA modification GTPase MnmE, found in Paracoccus denitrificans (strain Pd 1222).